A 386-amino-acid chain; its full sequence is ATP synthase gamma chain 2, chloroplastic (386 aa).

A disordered region spans residues 1–22; the sequence is MTGSISTSWLLSSPSNSNSASS. Residues 1–60 constitute a chloroplast transit peptide; it reads MTGSISTSWLLSSPSNSNSASSSESYSFIATLKPVRYYPFQSLTPNRISSRSPLPSIQIR. Residue C149 is part of the active site. An intrachain disulfide couples C260 to C266.

This sequence belongs to the ATPase gamma chain family. F-type ATPases have 2 components, CF(1) - the catalytic core - and CF(0) - the membrane proton channel. CF(1) has five subunits: alpha(3), beta(3), gamma(1), delta(1), epsilon(1). CF(0) has four main subunits: a, b, b' and c.

It is found in the plastid. The protein resides in the chloroplast thylakoid membrane. Produces ATP from ADP in the presence of a proton gradient across the membrane. The gamma chain is believed to be important in regulating ATPase activity and the flow of protons through the CF(0) complex. The protein is ATP synthase gamma chain 2, chloroplastic (ATPC2) of Arabidopsis thaliana (Mouse-ear cress).